A 199-amino-acid polypeptide reads, in one-letter code: dITP/XTP pyrophosphatase (199 aa).

7–12 (SNNRGK) serves as a coordination point for substrate. 2 residues coordinate Mg(2+): Asp39 and Asp68. Asp68 (proton acceptor) is an active-site residue. Substrate-binding positions include Ala69, 154–157 (FGFD), Lys177, and 182–183 (HR).

The protein belongs to the HAM1 NTPase family. As to quaternary structure, homodimer. Mg(2+) serves as cofactor.

The catalysed reaction is XTP + H2O = XMP + diphosphate + H(+). It catalyses the reaction dITP + H2O = dIMP + diphosphate + H(+). It carries out the reaction ITP + H2O = IMP + diphosphate + H(+). In terms of biological role, pyrophosphatase that catalyzes the hydrolysis of nucleoside triphosphates to their monophosphate derivatives, with a high preference for the non-canonical purine nucleotides XTP (xanthosine triphosphate), dITP (deoxyinosine triphosphate) and ITP. Seems to function as a house-cleaning enzyme that removes non-canonical purine nucleotides from the nucleotide pool, thus preventing their incorporation into DNA/RNA and avoiding chromosomal lesions. The polypeptide is dITP/XTP pyrophosphatase (Paracidovorax citrulli (strain AAC00-1) (Acidovorax citrulli)).